Reading from the N-terminus, the 95-residue chain is Small ribosomal subunit protein bS6 (95 aa).

The protein belongs to the bacterial ribosomal protein bS6 family. Part of the 30S ribosomal subunit.

Functionally, binds together with bS18 to 16S ribosomal RNA. The chain is Small ribosomal subunit protein bS6 (rpsF) from Bacillus subtilis (strain 168).